A 585-amino-acid chain; its full sequence is L-gulonolactone oxidase 3 (585 aa).

The first 24 residues, 1-24 (MRYSHTLQQFSILSFFVTIWTVQS), serve as a signal peptide directing secretion. Residues 51-233 (KTCHAANVTY…SKVKLSIEKA (183 aa)) enclose the FAD-binding PCMH-type domain.

Belongs to the oxygen-dependent FAD-linked oxidoreductase family. FAD serves as cofactor.

It is found in the vacuole. The catalysed reaction is L-gulono-1,4-lactone + O2 = L-ascorbate + H2O2 + H(+). The protein operates within cofactor biosynthesis; L-ascorbate biosynthesis. Its function is as follows. Catalyzes the oxidation of L-gulono-1,4-lactone to ascorbic acid. L-gulono-1,4-lactone is oxidized to hydrogen peroxide and L-xylo-hexulonolactone which spontaneously isomerizes to L-ascorbate. This chain is L-gulonolactone oxidase 3, found in Arabidopsis thaliana (Mouse-ear cress).